Reading from the N-terminus, the 276-residue chain is Ribosomal RNA small subunit methyltransferase A (276 aa).

6 residues coordinate S-adenosyl-L-methionine: asparagine 24, leucine 26, glycine 51, glutamate 72, aspartate 97, and asparagine 118.

It belongs to the class I-like SAM-binding methyltransferase superfamily. rRNA adenine N(6)-methyltransferase family. RsmA subfamily.

It localises to the cytoplasm. It carries out the reaction adenosine(1518)/adenosine(1519) in 16S rRNA + 4 S-adenosyl-L-methionine = N(6)-dimethyladenosine(1518)/N(6)-dimethyladenosine(1519) in 16S rRNA + 4 S-adenosyl-L-homocysteine + 4 H(+). Functionally, specifically dimethylates two adjacent adenosines (A1518 and A1519) in the loop of a conserved hairpin near the 3'-end of 16S rRNA in the 30S particle. May play a critical role in biogenesis of 30S subunits. In Clostridium acetobutylicum (strain ATCC 824 / DSM 792 / JCM 1419 / IAM 19013 / LMG 5710 / NBRC 13948 / NRRL B-527 / VKM B-1787 / 2291 / W), this protein is Ribosomal RNA small subunit methyltransferase A.